A 148-amino-acid polypeptide reads, in one-letter code: Large ribosomal subunit protein uL15 (148 aa).

A compositionally biased stretch (basic and acidic residues) spans 1–11; sequence MSEPIKLHDLR. A disordered region spans residues 1 to 52; that stretch reads MSEPIKLHDLRPAAGSNKAKTRVGRGEASKGKTAGRGTKGTKARKQVSAAFE.

This sequence belongs to the universal ribosomal protein uL15 family. In terms of assembly, part of the 50S ribosomal subunit.

In terms of biological role, binds to the 23S rRNA. The polypeptide is Large ribosomal subunit protein uL15 (Corynebacterium glutamicum (strain R)).